Consider the following 469-residue polypeptide: Aspartyl/glutamyl-tRNA(Asn/Gln) amidotransferase subunit B (469 aa).

Belongs to the GatB/GatE family. GatB subfamily. Heterotrimer of A, B and C subunits.

The catalysed reaction is L-glutamyl-tRNA(Gln) + L-glutamine + ATP + H2O = L-glutaminyl-tRNA(Gln) + L-glutamate + ADP + phosphate + H(+). It catalyses the reaction L-aspartyl-tRNA(Asn) + L-glutamine + ATP + H2O = L-asparaginyl-tRNA(Asn) + L-glutamate + ADP + phosphate + 2 H(+). Functionally, allows the formation of correctly charged Asn-tRNA(Asn) or Gln-tRNA(Gln) through the transamidation of misacylated Asp-tRNA(Asn) or Glu-tRNA(Gln) in organisms which lack either or both of asparaginyl-tRNA or glutaminyl-tRNA synthetases. The reaction takes place in the presence of glutamine and ATP through an activated phospho-Asp-tRNA(Asn) or phospho-Glu-tRNA(Gln). This Methanococcus aeolicus (strain ATCC BAA-1280 / DSM 17508 / OCM 812 / Nankai-3) protein is Aspartyl/glutamyl-tRNA(Asn/Gln) amidotransferase subunit B.